The sequence spans 941 residues: Cilia- and flagella-associated protein 69 (941 aa).

It is found in the cell projection. The protein resides in the cilium. Its subcellular location is the flagellum. Functionally, cilium- and flagellum-associated protein. In the olfactory epithelium, regulates the speed of activation and termination of the odor response and thus contributes to the robustness of olfactory transduction pathways. Required for sperm flagellum assembly and stability. The protein is Cilia- and flagella-associated protein 69 of Callithrix jacchus (White-tufted-ear marmoset).